The following is a 158-amino-acid chain: Anti-tumor lectin (158 aa).

Q1 carries the blocked amino end (Gln) modification. The 144-residue stretch at 12–155 (TSVDLAAPVT…STVVEAVTYT (144 aa)) folds into the Galectin domain. N-acetyl-alpha-neuraminyl-(2-&gt;3)-beta-D-galactosyl-(1-&gt;4)-beta-D-glucose contacts are provided by N43, H59, R63, N72, R74, W80, and E83.

In terms of assembly, homodimer. As to expression, detected in the fruiting body.

In terms of biological role, anti-tumor lectin with DNase activity. Inhibits the growth of several tumor cell lines in vitro. Induces lymphocyte infiltration and necrosis of tumor cells in a mouse tumor model. Induces apoptosis in HeLa cells. Binds N-acetylneuraminyl lactose (N-acetyl-alpha-neuraminyl-(2-&gt;3)-beta-D-galactosyl-(1-&gt;4)-beta-D-glucose). This chain is Anti-tumor lectin, found in Cyclocybe aegerita (Black poplar mushroom).